Reading from the N-terminus, the 298-residue chain is Beta-1,3-galactosyltransferase 5 (298 aa).

Topologically, residues 1 to 7 (MAFPKMR) are cytoplasmic. A helical; Signal-anchor for type II membrane protein membrane pass occupies residues 8-28 (LMYICLLVLGALCLYFSMYSL). Residues 29 to 298 (NPFKEQSFVY…PRTLLDYWQA (270 aa)) lie on the Lumenal side of the membrane. N-linked (GlcNAc...) asparagine glycans are attached at residues N130, N174, and N231.

The protein belongs to the glycosyltransferase 31 family.

The protein localises to the golgi apparatus membrane. The catalysed reaction is a globoside Gb4Cer (d18:1(4E)) + UDP-alpha-D-galactose = a globoside GalGb4Cer (d18:1(4E)) + UDP + H(+). It participates in protein modification; protein glycosylation. In terms of biological role, catalyzes the transfer of Gal to GlcNAc-based acceptors with a preference for the core3 O-linked glycan GlcNAc(beta1,3)GalNAc structure. Can use glycolipid LC3Cer as an efficient acceptor. The protein is Beta-1,3-galactosyltransferase 5 (B3GALT5) of Gorilla gorilla gorilla (Western lowland gorilla).